Here is a 405-residue protein sequence, read N- to C-terminus: Acetylornithine/succinyldiaminopimelate aminotransferase (405 aa).

Pyridoxal 5'-phosphate-binding positions include 108 to 109 and Phe141; that span reads GT. Arg144 contacts N(2)-acetyl-L-ornithine. 226–229 is a binding site for pyridoxal 5'-phosphate; sequence DEVQ. Residue Lys255 is modified to N6-(pyridoxal phosphate)lysine. Position 283 (Ser283) interacts with N(2)-acetyl-L-ornithine. Thr284 serves as a coordination point for pyridoxal 5'-phosphate.

Belongs to the class-III pyridoxal-phosphate-dependent aminotransferase family. ArgD subfamily. In terms of assembly, homodimer. It depends on pyridoxal 5'-phosphate as a cofactor.

The protein resides in the cytoplasm. It carries out the reaction N(2)-acetyl-L-ornithine + 2-oxoglutarate = N-acetyl-L-glutamate 5-semialdehyde + L-glutamate. The enzyme catalyses N-succinyl-(2S,6S)-2,6-diaminopimelate + 2-oxoglutarate = (S)-2-succinylamino-6-oxoheptanedioate + L-glutamate. The protein operates within amino-acid biosynthesis; L-arginine biosynthesis; N(2)-acetyl-L-ornithine from L-glutamate: step 4/4. Its pathway is amino-acid biosynthesis; L-lysine biosynthesis via DAP pathway; LL-2,6-diaminopimelate from (S)-tetrahydrodipicolinate (succinylase route): step 2/3. Involved in both the arginine and lysine biosynthetic pathways. This is Acetylornithine/succinyldiaminopimelate aminotransferase from Salmonella typhi.